We begin with the raw amino-acid sequence, 193 residues long: Hydroxyacylglutathione hydrolase-like protein (193 aa).

5 residues coordinate Zn(2+): His-54, His-56, Asp-58, His-59, and His-110.

Belongs to the metallo-beta-lactamase superfamily. Glyoxalase II family. It depends on Zn(2+) as a cofactor.

Functionally, hydrolase acting on ester bonds. The polypeptide is Hydroxyacylglutathione hydrolase-like protein (HAGHL) (Bos taurus (Bovine)).